The sequence spans 363 residues: 3-isopropylmalate dehydrogenase (363 aa).

79-92 (GPKWEHLPPNDQPE) is a binding site for NAD(+). Substrate is bound by residues Arg100, Arg110, Arg139, and Asp228. Positions 228, 252, and 256 each coordinate Mg(2+). 286–298 (GSAPDIAGKNIAN) provides a ligand contact to NAD(+).

The protein belongs to the isocitrate and isopropylmalate dehydrogenases family. LeuB type 1 subfamily. As to quaternary structure, homodimer. Mg(2+) serves as cofactor. Requires Mn(2+) as cofactor.

The protein resides in the cytoplasm. The catalysed reaction is (2R,3S)-3-isopropylmalate + NAD(+) = 4-methyl-2-oxopentanoate + CO2 + NADH. It functions in the pathway amino-acid biosynthesis; L-leucine biosynthesis; L-leucine from 3-methyl-2-oxobutanoate: step 3/4. Its function is as follows. Catalyzes the oxidation of 3-carboxy-2-hydroxy-4-methylpentanoate (3-isopropylmalate) to 3-carboxy-4-methyl-2-oxopentanoate. The product decarboxylates to 4-methyl-2 oxopentanoate. The protein is 3-isopropylmalate dehydrogenase of Aliivibrio fischeri (strain ATCC 700601 / ES114) (Vibrio fischeri).